The primary structure comprises 211 residues: MGNIITDTIIITSDKCDIVDNDNVERIQVWLSKNILRKFQINENEPLQLIILKRFKRILLICPSHDISQHVMDASRALEMENFNFSYSLQDGQRNLTKQYLKVPESEKMFLISPPASPPPEFDFSKCEDAPQRHIQSHIQQDQQQRLEASQLLPNNPDKNNNGTFTLLKSKVGAITIDRCPTNDGNGQMQLADHVKTAFPPKSIFDTDDDD.

Residues Ser113 and Ser117 each carry the phosphoserine modification. Residue Thr182 is modified to Phosphothreonine.

This sequence belongs to the RCAN family.

In terms of biological role, inhibits calcineurin-dependent transcriptional responses by binding to the catalytic domain of calcineurin. This is Calcipressin-like protein (RCN1) from Saccharomyces cerevisiae (strain ATCC 204508 / S288c) (Baker's yeast).